We begin with the raw amino-acid sequence, 244 residues long: Protein HRI1 (244 aa).

Residue Ser-143 is modified to Phosphoserine.

The protein belongs to the HRI1 family. In terms of assembly, interacts with HRR25. May interact with SEC72.

It localises to the cytoplasm. The protein resides in the nucleus. Unknown. Non essential. This chain is Protein HRI1 (HRI1), found in Saccharomyces cerevisiae (strain ATCC 204508 / S288c) (Baker's yeast).